The chain runs to 187 residues: Elongation factor P (187 aa).

Belongs to the elongation factor P family.

It is found in the cytoplasm. Its pathway is protein biosynthesis; polypeptide chain elongation. Functionally, involved in peptide bond synthesis. Stimulates efficient translation and peptide-bond synthesis on native or reconstituted 70S ribosomes in vitro. Probably functions indirectly by altering the affinity of the ribosome for aminoacyl-tRNA, thus increasing their reactivity as acceptors for peptidyl transferase. This Rhodococcus opacus (strain B4) protein is Elongation factor P.